Reading from the N-terminus, the 465-residue chain is Methylenetetrahydrofolate--tRNA-(uracil-5-)-methyltransferase TrmFO (465 aa).

3–8 lines the FAD pocket; the sequence is GAGLAG.

Belongs to the MnmG family. TrmFO subfamily. The cofactor is FAD.

The protein localises to the cytoplasm. It carries out the reaction uridine(54) in tRNA + (6R)-5,10-methylene-5,6,7,8-tetrahydrofolate + NADH + H(+) = 5-methyluridine(54) in tRNA + (6S)-5,6,7,8-tetrahydrofolate + NAD(+). The catalysed reaction is uridine(54) in tRNA + (6R)-5,10-methylene-5,6,7,8-tetrahydrofolate + NADPH + H(+) = 5-methyluridine(54) in tRNA + (6S)-5,6,7,8-tetrahydrofolate + NADP(+). Catalyzes the folate-dependent formation of 5-methyl-uridine at position 54 (M-5-U54) in all tRNAs. In Bradyrhizobium sp. (strain BTAi1 / ATCC BAA-1182), this protein is Methylenetetrahydrofolate--tRNA-(uracil-5-)-methyltransferase TrmFO.